The primary structure comprises 209 residues: MEQQKIPQATAKRLPLYYRFIQNLSLSGKQRVSSAELSEAVKVDSATIRRDFSYFGALGKKGYGYNVNYLLSFFRETLDQDDITRVALIGVGNLGTAFLHYNFTKNNNTKIEMAFDVSEEKVGTEIGGIPVYHLDELEERLSTDIQVAILTVPATVAQSVADRLAETNVHGILNFTPARLNVSESIRIHHIDLAVELQTLVYFLKNYPQ.

Positions 16–55 form a DNA-binding region, H-T-H motif; the sequence is LYYRFIQNLSLSGKQRVSSAELSEAVKVDSATIRRDFSYF. An NAD(+)-binding site is contributed by 90–95; sequence GVGNLG.

This sequence belongs to the transcriptional regulatory Rex family. As to quaternary structure, homodimer.

The protein localises to the cytoplasm. Modulates transcription in response to changes in cellular NADH/NAD(+) redox state. In Bacillus thuringiensis (strain Al Hakam), this protein is Redox-sensing transcriptional repressor Rex.